The sequence spans 262 residues: Ribosomal RNA small subunit methyltransferase A (262 aa).

S-adenosyl-L-methionine is bound by residues Ile-18, Gly-43, Glu-65, Asp-91, and Asn-110.

This sequence belongs to the class I-like SAM-binding methyltransferase superfamily. rRNA adenine N(6)-methyltransferase family. RsmA subfamily.

The protein resides in the cytoplasm. It carries out the reaction adenosine(1518)/adenosine(1519) in 16S rRNA + 4 S-adenosyl-L-methionine = N(6)-dimethyladenosine(1518)/N(6)-dimethyladenosine(1519) in 16S rRNA + 4 S-adenosyl-L-homocysteine + 4 H(+). In terms of biological role, specifically dimethylates two adjacent adenosines (A1518 and A1519) in the loop of a conserved hairpin near the 3'-end of 16S rRNA in the 30S particle. May play a critical role in biogenesis of 30S subunits. This chain is Ribosomal RNA small subunit methyltransferase A, found in Ehrlichia canis (strain Jake).